We begin with the raw amino-acid sequence, 498 residues long: Probable cytosol aminopeptidase (498 aa).

Residues lysine 269 and aspartate 274 each coordinate Mn(2+). Residue lysine 281 is part of the active site. Residues aspartate 292, aspartate 351, and glutamate 353 each coordinate Mn(2+). The active site involves arginine 355.

The protein belongs to the peptidase M17 family. It depends on Mn(2+) as a cofactor.

The protein resides in the cytoplasm. The catalysed reaction is Release of an N-terminal amino acid, Xaa-|-Yaa-, in which Xaa is preferably Leu, but may be other amino acids including Pro although not Arg or Lys, and Yaa may be Pro. Amino acid amides and methyl esters are also readily hydrolyzed, but rates on arylamides are exceedingly low.. The enzyme catalyses Release of an N-terminal amino acid, preferentially leucine, but not glutamic or aspartic acids.. In terms of biological role, presumably involved in the processing and regular turnover of intracellular proteins. Catalyzes the removal of unsubstituted N-terminal amino acids from various peptides. The sequence is that of Probable cytosol aminopeptidase from Glaesserella parasuis serovar 5 (strain SH0165) (Haemophilus parasuis).